Consider the following 240-residue polypeptide: MVVMDSPVSGRMADQNIDPNTTTSPSPIEKHVSAIKAISGDEKAPSKEKKNYASKKSTTVIQKSHCFQNSWTFWFDNPSSKSNQVIWGSSLRSLYTFATIEEFWSLYNNIHPPTKWVSGSDLYCFKDKIEPKWEDPICANGGKWTMFFPRATLESNWLNTLLALVGEQFDQGDEICGAVLNFRTRGDRISLWTKKAANEEAQLSIGKQWKELLGYNDTIGFIVHEDAKTLDRDAKRRYTV.

Positions 1–29 are disordered; sequence MVVMDSPVSGRMADQNIDPNTTTSPSPIE. Residues 17–26 show a composition bias toward polar residues; that stretch reads IDPNTTTSPS. EIF4G-binding regions lie at residues 65–68 and 75–111; these read HCFQ and FDNP…NNIH. MRNA is bound by residues 83–88, lysine 115, and 133–134; these read NQVIWG and WE. A disulfide bond links cysteine 138 and cysteine 176. Residues 159–168 are EIF4G-binding; sequence NTLLALVGEQ. Residues 183-188 and 228-232 contribute to the mRNA site; these read RTRGDR and KTLDR.

This sequence belongs to the eukaryotic initiation factor 4E family. In terms of assembly, EIF4F is a multi-subunit complex, the composition of which varies with external and internal environmental conditions. It is composed of at least EIF4A, EIF4E and EIF4G. EIF4E is also known to interact with other partners. In higher plants two isoforms of EIF4F have been identified, named isoform EIF4F and isoform EIF(iso)4F. Isoform EIF4F has subunits p220 and p26, whereas isoform EIF(iso)4F has subunits p82 and p28. According to the redox status, the Cys-138-Cys-176 disulfide bridge may have a role in regulating protein function by affecting its ability to bind capped mRNA.

It localises to the nucleus. The protein resides in the cytoplasm. In terms of biological role, component of the protein complex eIF4F, which is involved in the recognition of the mRNA cap, ATP-dependent unwinding of 5'-terminal secondary structure and recruitment of mRNA to the ribosome. Recognizes and binds the 7-methylguanosine-containing mRNA cap during an early step in the initiation of protein synthesis and facilitates ribosome binding by inducing the unwinding of the mRNAs secondary structures. The protein is Eukaryotic translation initiation factor 4E-2 of Arabidopsis thaliana (Mouse-ear cress).